We begin with the raw amino-acid sequence, 776 residues long: 3-isopropylmalate dehydratase (776 aa).

[4Fe-4S] cluster is bound by residues cysteine 357, cysteine 418, and cysteine 421. Basic and acidic residues predominate over residues 482–493 (SAPKVEVRHDTD). 2 disordered regions span residues 482–518 (SAPKVEVRHDTDSSTLEEANYGHAKEEPPSAELSDVA) and 525–544 (DIPVSNSSTQSPGSAPSADA). Over residues 527–538 (PVSNSSTQSPGS) the composition is skewed to polar residues.

It belongs to the aconitase/IPM isomerase family. As to quaternary structure, monomer. The cofactor is [4Fe-4S] cluster.

It catalyses the reaction (2R,3S)-3-isopropylmalate = (2S)-2-isopropylmalate. The protein operates within amino-acid biosynthesis; L-leucine biosynthesis; L-leucine from 3-methyl-2-oxobutanoate: step 2/4. In terms of biological role, catalyzes the isomerization between 2-isopropylmalate and 3-isopropylmalate, via the formation of 2-isopropylmaleate. The protein is 3-isopropylmalate dehydratase (LEU1) of Eremothecium gossypii (strain ATCC 10895 / CBS 109.51 / FGSC 9923 / NRRL Y-1056) (Yeast).